Consider the following 85-residue polypeptide: ATP synthase epsilon chain (85 aa).

Belongs to the ATPase epsilon chain family. As to quaternary structure, F-type ATPases have 2 components, CF(1) - the catalytic core - and CF(0) - the membrane proton channel. CF(1) has five subunits: alpha(3), beta(3), gamma(1), delta(1), epsilon(1). CF(0) has three main subunits: a, b and c.

It localises to the cell membrane. Functionally, produces ATP from ADP in the presence of a proton gradient across the membrane. The chain is ATP synthase epsilon chain from Frankia casuarinae (strain DSM 45818 / CECT 9043 / HFP020203 / CcI3).